A 1368-amino-acid polypeptide reads, in one-letter code: DNA-directed RNA polymerase subunit beta (1368 aa).

It belongs to the RNA polymerase beta chain family. In terms of assembly, the RNAP catalytic core consists of 2 alpha, 1 beta, 1 beta' and 1 omega subunit. When a sigma factor is associated with the core the holoenzyme is formed, which can initiate transcription.

The enzyme catalyses RNA(n) + a ribonucleoside 5'-triphosphate = RNA(n+1) + diphosphate. DNA-dependent RNA polymerase catalyzes the transcription of DNA into RNA using the four ribonucleoside triphosphates as substrates. The chain is DNA-directed RNA polymerase subunit beta from Cupriavidus pinatubonensis (strain JMP 134 / LMG 1197) (Cupriavidus necator (strain JMP 134)).